A 556-amino-acid polypeptide reads, in one-letter code: Sesquiterpene synthase 2 (556 aa).

Residues Asp-309, Asp-313, Asp-453, and Glu-461 each coordinate Mg(2+). Residues 309-313 carry the DDXXD motif motif; it reads DDIYD.

Belongs to the terpene synthase family. Tpsa subfamily. Requires Mg(2+) as cofactor. It depends on Mn(2+) as a cofactor. As to expression, mostly expressed in roots and mature leaflets and, to a lower extent, in rachis and developing leaflets.

It catalyses the reaction (2E,6E)-farnesyl diphosphate = alpha-humulene + diphosphate. It carries out the reaction (2E,6E)-farnesyl diphosphate = alpha-selinene + diphosphate. The catalysed reaction is (2E,6E)-farnesyl diphosphate = delta-cadinene + diphosphate. The enzyme catalyses (2E,6E)-farnesyl diphosphate = (1S,2S,4R)-beta-elemene + diphosphate. It functions in the pathway secondary metabolite biosynthesis; terpenoid biosynthesis. In terms of biological role, sesquiterpene synthase involved in the biosynthesis of volatile compounds known for their medicinal efficacy for treating enteritis, dysentery, itch and some cancers. Mediates the conversion of (2E,6E)-farnesyl diphosphate (FPP) into beta-elemene, alpha-humulene, delta-cadinene and alpha-selinene. This is Sesquiterpene synthase 2 from Toona sinensis (Chinese mahogany).